Reading from the N-terminus, the 536-residue chain is MFS-type efflux pump MFS1 (536 aa).

3 helical membrane-spanning segments follow: residues 30–50 (VTGL…LLVA), 80–100 (YLLT…FFPV), and 102–122 (WVFL…GAAP). A glycan (N-linked (GlcNAc...) asparagine) is linked at Asn-123. 3 helical membrane passes run 133-153 (VAGI…AYSI), 163-183 (GAIG…GGAF), and 191-211 (WCFY…LIFL). Asn-221 carries an N-linked (GlcNAc...) asparagine glycan. The next 8 membrane-spanning stretches (helical) occupy residues 234–254 (IGTA…QWGG), 264–284 (IIAL…FQIR), 306–326 (FFLF…PIWF), 342–362 (IPMV…VTAI), 366–386 (APLY…LTTF), 400–420 (IIFG…AQAV), 426–446 (VAVG…LFVS), and 503–523 (TWYV…GMEW).

Belongs to the major facilitator superfamily. TCR/Tet family.

Its subcellular location is the cell membrane. In terms of biological role, MFS-type efflux pump involved in the modulation susceptibility to azoles, including fluconazole, itraconazole, ketoconazole, miconazole and voriconazole. Confers also increased resistance chloramphenicol and thiamphenicol, suggesting that it acts as a pleiotropic drug transporter with a broad substrate spectrum. Finally, increases the tolerance to cycloheximide when expressed in S.cerevisiae, but not in dermatophyte species. This is MFS-type efflux pump MFS1 from Trichophyton rubrum (strain ATCC MYA-4607 / CBS 118892) (Athlete's foot fungus).